The chain runs to 226 residues: V-type proton ATPase subunit E 1 (226 aa).

Ala-2 bears the N-acetylalanine mark. Tyr-56 is modified (phosphotyrosine).

This sequence belongs to the V-ATPase E subunit family. In terms of assembly, V-ATPase is a heteromultimeric enzyme made up of two complexes: the ATP-hydrolytic V1 complex and the proton translocation V0 complex. The V1 complex consists of three catalytic AB heterodimers that form a heterohexamer, three peripheral stalks each consisting of EG heterodimers, one central rotor including subunits D and F, and the regulatory subunits C and H. The proton translocation complex V0 consists of the proton transport subunit a, a ring of proteolipid subunits c9c'', rotary subunit d, subunits e and f, and the accessory subunits ATP6AP1/Ac45 and ATP6AP2/PRR. Interacts with RABL2/RABL2A; binds preferentially to GTP-bound RABL2. Interacts with ALDOC. Interacts with RAB11B. Expressed within the midpiece of sperm tail (at protein level). Kidney; localizes to early distal nephron, encompassing thick ascending limbs and distal convoluted tubules (at protein level).

The protein localises to the apical cell membrane. Its subcellular location is the cytoplasmic vesicle. It localises to the secretory vesicle. It is found in the synaptic vesicle membrane. The protein resides in the clathrin-coated vesicle membrane. Its function is as follows. Subunit of the V1 complex of vacuolar(H+)-ATPase (V-ATPase), a multisubunit enzyme composed of a peripheral complex (V1) that hydrolyzes ATP and a membrane integral complex (V0) that translocates protons. V-ATPase is responsible for acidifying and maintaining the pH of intracellular compartments and in some cell types, is targeted to the plasma membrane, where it is responsible for acidifying the extracellular environment. In Mus musculus (Mouse), this protein is V-type proton ATPase subunit E 1 (Atp6v1e1).